The primary structure comprises 343 residues: UPF0284 protein Msed_0735 (343 aa).

It belongs to the UPF0284 family.

In Metallosphaera sedula (strain ATCC 51363 / DSM 5348 / JCM 9185 / NBRC 15509 / TH2), this protein is UPF0284 protein Msed_0735.